The sequence spans 303 residues: S-methyl-5'-thioadenosine phosphorylase 1 (303 aa).

Residues S14, 57 to 58 (RH), and 90 to 91 (SA) contribute to the phosphate site. Residue M198 participates in substrate binding. S199 provides a ligand contact to phosphate. 222 to 224 (DYD) serves as a coordination point for substrate.

Belongs to the PNP/MTAP phosphorylase family. MTAP subfamily. In terms of assembly, homotrimer.

The protein localises to the cytoplasm. Its subcellular location is the nucleus. It catalyses the reaction S-methyl-5'-thioadenosine + phosphate = 5-(methylsulfanyl)-alpha-D-ribose 1-phosphate + adenine. Its pathway is amino-acid biosynthesis; L-methionine biosynthesis via salvage pathway; S-methyl-5-thio-alpha-D-ribose 1-phosphate from S-methyl-5'-thioadenosine (phosphorylase route): step 1/1. Functionally, catalyzes the reversible phosphorylation of S-methyl-5'-thioadenosine (MTA) to adenine and 5-methylthioribose-1-phosphate. Involved in the breakdown of MTA, a major by-product of polyamine biosynthesis. Responsible for the first step in the methionine salvage pathway after MTA has been generated from S-adenosylmethionine. Has broad substrate specificity with 6-aminopurine nucleosides as preferred substrates. This Puccinia graminis f. sp. tritici (strain CRL 75-36-700-3 / race SCCL) (Black stem rust fungus) protein is S-methyl-5'-thioadenosine phosphorylase 1.